The sequence spans 313 residues: Olfactory receptor 4M2 (313 aa).

Residues 1 to 25 lie on the Extracellular side of the membrane; that stretch reads METANYTKVTEFVLTGLSQTPEVQL. N5 carries an N-linked (GlcNAc...) asparagine glycan. Residues 26-49 traverse the membrane as a helical segment; the sequence is VLFVIFLSFYLFILPGNILIICTI. Residues 50 to 57 lie on the Cytoplasmic side of the membrane; the sequence is SLDPHLTS. A helical transmembrane segment spans residues 58-79; the sequence is PMYFLLANLAFLDIWYSSITAP. Residues 80–100 are Extracellular-facing; it reads EMLIDFFVERKIISFDGCIAQ. A disulfide bridge links C97 with C189. Residues 101–120 form a helical membrane-spanning segment; the sequence is LFFLHFAGASEMFLLTVMAF. Over 121 to 139 the chain is Cytoplasmic; the sequence is DLYTAICRPLHYATIMNQR. Residues 140–158 form a helical membrane-spanning segment; it reads LCCILVALSWRGGFIHSII. Topologically, residues 159 to 195 are extracellular; the sequence is QVALIVRLPFCGPNELDSYFCDITQVVRIACANTFPE. Residues 196–219 traverse the membrane as a helical segment; it reads ELVMICSSGLISVVCLIALLMSYA. At 220-237 the chain is on the cytoplasmic side; that stretch reads FLLALFKKLSGSGENTNR. Residues 238 to 260 traverse the membrane as a helical segment; the sequence is AMSTCYSHITIVVLMFGPSIYIY. Topologically, residues 261-271 are extracellular; that stretch reads ARPFDSFSLDK. A helical transmembrane segment spans residues 272-291; it reads VVSVFNTLIFPLRNPIIYTL. The Cytoplasmic segment spans residues 292 to 313; that stretch reads RNKEVKAAMRKLVTKYILCKEK.

Belongs to the G-protein coupled receptor 1 family.

The protein resides in the cell membrane. In terms of biological role, odorant receptor. The protein is Olfactory receptor 4M2 (OR4M2) of Homo sapiens (Human).